We begin with the raw amino-acid sequence, 324 residues long: Delta-aminolevulinic acid dehydratase (324 aa).

Positions 118, 120, and 128 each coordinate Zn(2+). Lys195 serves as the catalytic Schiff-base intermediate with substrate. Positions 205 and 217 each coordinate 5-aminolevulinate. Glu233 contacts Mg(2+). Catalysis depends on Lys248, which acts as the Schiff-base intermediate with substrate. 5-aminolevulinate is bound by residues Ser274 and Tyr313.

Belongs to the ALAD family. As to quaternary structure, homooctamer. Zn(2+) is required as a cofactor.

It carries out the reaction 2 5-aminolevulinate = porphobilinogen + 2 H2O + H(+). Its pathway is porphyrin-containing compound metabolism; protoporphyrin-IX biosynthesis; coproporphyrinogen-III from 5-aminolevulinate: step 1/4. Its function is as follows. Catalyzes an early step in the biosynthesis of tetrapyrroles. Binds two molecules of 5-aminolevulinate per subunit, each at a distinct site, and catalyzes their condensation to form porphobilinogen. The chain is Delta-aminolevulinic acid dehydratase (hemB) from Staphylococcus aureus (strain NCTC 8325 / PS 47).